The chain runs to 270 residues: Oxidoreductase claK (270 aa).

Belongs to the avfA family.

The protein operates within pigment biosynthesis. Its function is as follows. Oxidoreductase; part of the gene cluster that mediates the biosynthesis of the bianthraquinone cladofulvin, a conidial pigment not required for virulence but that plays a role in fitness and resistance to environmental stresses including UV light and low-temperature stress. The pathway begins with the synthesis of atrochrysone thioester by the polyketide synthase (PKS) claG. The atrochrysone carboxyl ACP thioesterase claF then breaks the thioester bond and releases the atrochrysone carboxylic acid from claG. This compound is decarboxylated by claH to yield emodin, which is further converted to chrysophanol hydroquinone by the reductase claC and the dehydratase claB. The cytochrome monooxygenase P450 claM then catalyzes the dimerization of nataloe-emodin to cladofulvin. The polypeptide is Oxidoreductase claK (Passalora fulva (Tomato leaf mold)).